Here is a 366-residue protein sequence, read N- to C-terminus: Pectinesterase A (366 aa).

The N-terminal stretch at 1–24 (MLKTISGTLALSLIIAASVHQAQA) is a signal peptide. Positions 109 and 153 each coordinate substrate. Catalysis depends on aspartate 178, which acts as the Proton donor. An intrachain disulfide couples cysteine 192 to cysteine 212. The Nucleophile role is filled by aspartate 199. Substrate-binding residues include arginine 219, asparagine 226, tyrosine 230, arginine 267, tryptophan 269, and threonine 272.

It belongs to the pectinesterase family. Monomer.

It is found in the secreted. The catalysed reaction is [(1-&gt;4)-alpha-D-galacturonosyl methyl ester](n) + n H2O = [(1-&gt;4)-alpha-D-galacturonosyl](n) + n methanol + n H(+). It functions in the pathway glycan metabolism; pectin degradation; 2-dehydro-3-deoxy-D-gluconate from pectin: step 1/5. Functionally, involved in maceration and soft-rotting of plant tissue. The polypeptide is Pectinesterase A (pemA) (Dickeya chrysanthemi (Pectobacterium chrysanthemi)).